We begin with the raw amino-acid sequence, 267 residues long: 3-methyl-2-oxobutanoate hydroxymethyltransferase (267 aa).

Mg(2+)-binding residues include aspartate 46 and aspartate 85. 3-methyl-2-oxobutanoate contacts are provided by residues 46–47 (DS), aspartate 85, and lysine 115. A Mg(2+)-binding site is contributed by glutamate 117. Catalysis depends on glutamate 184, which acts as the Proton acceptor.

It belongs to the PanB family. In terms of assembly, homodecamer; pentamer of dimers. The cofactor is Mg(2+).

The protein resides in the cytoplasm. It carries out the reaction 3-methyl-2-oxobutanoate + (6R)-5,10-methylene-5,6,7,8-tetrahydrofolate + H2O = 2-dehydropantoate + (6S)-5,6,7,8-tetrahydrofolate. The protein operates within cofactor biosynthesis; (R)-pantothenate biosynthesis; (R)-pantoate from 3-methyl-2-oxobutanoate: step 1/2. Functionally, catalyzes the reversible reaction in which hydroxymethyl group from 5,10-methylenetetrahydrofolate is transferred onto alpha-ketoisovalerate to form ketopantoate. This Citrifermentans bemidjiense (strain ATCC BAA-1014 / DSM 16622 / JCM 12645 / Bem) (Geobacter bemidjiensis) protein is 3-methyl-2-oxobutanoate hydroxymethyltransferase.